Here is a 291-residue protein sequence, read N- to C-terminus: Maintenance of mitochondrial morphology protein 1 (291 aa).

Residues 1-16 lie on the Lumenal side of the membrane; the sequence is MPNNYVFSLQPTFTQG. Residues 17–37 traverse the membrane as a helical segment; it reads LILGQLSILVLLGMILKFLFL. At 38–291 the chain is on the cytoplasmic side; that stretch reads DSTQHPFESS…KKEMSDADLS (254 aa). The SMP-LTD domain maps to 73 to 277; the sequence is NAESAEWFNV…LPGLASVVDV (205 aa).

Belongs to the MMM1 family. As to quaternary structure, homodimer. Component of the ER-mitochondria encounter structure (ERMES) or MDM complex, composed of MMM1, MDM10, MDM12 and MDM34. An MMM1 homodimer associates with one molecule of MDM12 on each side in a pairwise head-to-tail manner, and the SMP-LTD domains of MMM1 and MDM12 generate a continuous hydrophobic tunnel for phospholipid trafficking.

The protein resides in the endoplasmic reticulum membrane. Component of the ERMES/MDM complex, which serves as a molecular tether to connect the endoplasmic reticulum (ER) and mitochondria. Components of this complex are involved in the control of mitochondrial shape and protein biogenesis, and function in nonvesicular lipid trafficking between the ER and mitochondria. The MDM12-MMM1 subcomplex functions in the major beta-barrel assembly pathway that is responsible for biogenesis of all outer membrane beta-barrel proteins, and acts in a late step after the SAM complex. The MDM10-MDM12-MMM1 subcomplex further acts in the TOM40-specific pathway after the action of the MDM12-MMM1 complex. Essential for establishing and maintaining the structure of mitochondria and maintenance of mtDNA nucleoids. The polypeptide is Maintenance of mitochondrial morphology protein 1 (Laccaria bicolor (strain S238N-H82 / ATCC MYA-4686) (Bicoloured deceiver)).